A 406-amino-acid polypeptide reads, in one-letter code: Tyrosine--tRNA ligase (406 aa).

Tyrosine 35 is an L-tyrosine binding site. The short motif at 40-49 (PTADSLHVGH) is the 'HIGH' region element. 2 residues coordinate L-tyrosine: tyrosine 168 and glutamine 172. A 'KMSKS' region motif is present at residues 228-232 (KMGKT). Lysine 231 serves as a coordination point for ATP. One can recognise an S4 RNA-binding domain in the interval 340–404 (SELLDILVEA…RGKKNYNKIV (65 aa)).

Belongs to the class-I aminoacyl-tRNA synthetase family. TyrS type 1 subfamily. Homodimer.

The protein resides in the cytoplasm. The catalysed reaction is tRNA(Tyr) + L-tyrosine + ATP = L-tyrosyl-tRNA(Tyr) + AMP + diphosphate + H(+). Functionally, catalyzes the attachment of tyrosine to tRNA(Tyr) in a two-step reaction: tyrosine is first activated by ATP to form Tyr-AMP and then transferred to the acceptor end of tRNA(Tyr). The chain is Tyrosine--tRNA ligase from Clostridium perfringens (strain ATCC 13124 / DSM 756 / JCM 1290 / NCIMB 6125 / NCTC 8237 / Type A).